Consider the following 142-residue polypeptide: MEVCIVKPDRIFFKEEADELLLPTNTGYIGILKDHAPLVTGLDNGVLGVRQGTTWRFLALLGGFGVIKEGRVNILCRDIQDASEINLEEAEQLAATAKESMTKSDSKKGYIENQLKFDRETARVAAAKMYKESAGGSPVFGN.

The protein belongs to the ATPase epsilon chain family. In terms of assembly, F-type ATPases have 2 components, CF(1) - the catalytic core - and CF(0) - the membrane proton channel. CF(1) has five subunits: alpha(3), beta(3), gamma(1), delta(1), epsilon(1). CF(0) has three main subunits: a, b and c.

It is found in the plastid. It localises to the chloroplast thylakoid membrane. Produces ATP from ADP in the presence of a proton gradient across the membrane. The protein is ATP synthase epsilon chain, chloroplastic of Ostreococcus tauri.